The sequence spans 469 residues: Glutamate--tRNA ligase (469 aa).

The 'HIGH' region motif lies at 8 to 18 (PSPTGFLHVGG). Zn(2+) contacts are provided by Cys97, Cys99, Cys124, and Asp126. The 'KMSKS' region signature appears at 236–240 (KLSKR). An ATP-binding site is contributed by Lys239.

The protein belongs to the class-I aminoacyl-tRNA synthetase family. Glutamate--tRNA ligase type 1 subfamily. In terms of assembly, monomer. It depends on Zn(2+) as a cofactor.

Its subcellular location is the cytoplasm. The catalysed reaction is tRNA(Glu) + L-glutamate + ATP = L-glutamyl-tRNA(Glu) + AMP + diphosphate. Functionally, catalyzes the attachment of glutamate to tRNA(Glu) in a two-step reaction: glutamate is first activated by ATP to form Glu-AMP and then transferred to the acceptor end of tRNA(Glu). The polypeptide is Glutamate--tRNA ligase (Francisella philomiragia subsp. philomiragia (strain ATCC 25017 / CCUG 19701 / FSC 153 / O#319-036)).